Here is a 51-residue protein sequence, read N- to C-terminus: Cytochrome bd ubiquinol oxidase subunit X (51 aa).

Residues 1-3 (MWY) lie on the Cytoplasmic side of the membrane. A helical transmembrane segment spans residues 4-26 (FSWLLGLPLAAAFAVLNAMWYEL). At 27–51 (MDDRARKRLAADPTAELALEGNKHH) the chain is on the periplasmic side.

This sequence belongs to the cytochrome ubiquinol oxidase subunit X family. In terms of assembly, may be a subunit of cytochrome ubiquinol oxidase.

Its subcellular location is the cell inner membrane. It carries out the reaction 2 a ubiquinol + O2(in) + 4 H(+)(in) = 2 a ubiquinone + 2 H2O(in) + 4 H(+)(out). It functions in the pathway energy metabolism; oxidative phosphorylation. Required for correct functioning of cytochrome bd oxidase. The sequence is that of Cytochrome bd ubiquinol oxidase subunit X (cydX) from Brucella abortus (strain 2308).